The primary structure comprises 593 residues: Transmembrane 9 superfamily member 4 (593 aa).

The first 25 residues, 1-25, serve as a signal peptide directing secretion; the sequence is MVLLPSMTSLLLVFLFLYGVSPVIS. Residues 26–230 are Lumenal-facing; the sequence is DGSDHRYKVG…SMPHHLEIHW (205 aa). A helical membrane pass occupies residues 231-251; the sequence is FSIINSCVTVLLLTGFLATIL. At 252–303 the chain is on the cytoplasmic side; it reads MRVLKNDFVKYAHDEEAVDDQEETGWKLIHGDVFRFPKHKSLLAAALGSGTQ. A helical transmembrane segment spans residues 304–324; that stretch reads LFTLAVFIFMLALVGVFYPYN. At 325-326 the chain is on the lumenal side; that stretch reads RG. The chain crosses the membrane as a helical span at residues 327–347; that stretch reads ALFTALVVIYALTSGIAGYTA. Topologically, residues 348–366 are cytoplasmic; it reads ASFYCQLEGTNWVRNVILT. A helical transmembrane segment spans residues 367–387; sequence GSLFCGPLLITFSFLNTVAIA. Topologically, residues 388-398 are lumenal; that stretch reads YQATAALPFGT. Residues 399–419 traverse the membrane as a helical segment; the sequence is IVVIFLIWALVTSPLLILGGI. The Cytoplasmic portion of the chain corresponds to 420-453; it reads AGKNRKSEFQAPCRTTKYPREIPPMRWYRRTLPQ. A helical transmembrane segment spans residues 454 to 474; sequence MAMAGFLPFSAIYIELYYIFA. The Lumenal segment spans residues 475–486; the sequence is SVWGHRIYTIYS. Residues 487 to 507 form a helical membrane-spanning segment; it reads ILSIVFLILVIVTAFITVALT. At 508–522 the chain is on the cytoplasmic side; that stretch reads YFQLAAEDHEWWWRS. The chain crosses the membrane as a helical span at residues 523-543; that stretch reads LLCGGSTGLFIYAYCLYYYYA. Residues 544 to 554 are Lumenal-facing; that stretch reads RSDMSGFMQTS. Residues 555-575 traverse the membrane as a helical segment; it reads FFFGYMACICYGFFLMLGTIG. Residues 576–593 lie on the Cytoplasmic side of the membrane; the sequence is FCASLLFVRHIYRSIKCE. The Endoplasmic reticulum export signal signature appears at 582–587; it reads FVRHIY. The Golgi retention signal signature appears at 591–593; it reads KCE.

The protein belongs to the nonaspanin (TM9SF) (TC 9.A.2) family.

The protein localises to the endosome membrane. It localises to the golgi apparatus membrane. The protein is Transmembrane 9 superfamily member 4 of Arabidopsis thaliana (Mouse-ear cress).